Reading from the N-terminus, the 342-residue chain is Outer membrane porin C (342 aa).

This sequence belongs to the Gram-negative porin family. In terms of assembly, homotrimer.

The protein resides in the cell outer membrane. In terms of biological role, forms pores that allow passive diffusion of small molecules across the outer membrane. In R.aquatilis OmpC is involved in the adhesion to wheat roots. The protein is Outer membrane porin C (ompC) of Rahnella aquatilis.